Consider the following 114-residue polypeptide: Large ribosomal subunit protein uL22 (114 aa).

The protein belongs to the universal ribosomal protein uL22 family. Part of the 50S ribosomal subunit.

This protein binds specifically to 23S rRNA; its binding is stimulated by other ribosomal proteins, e.g. L4, L17, and L20. It is important during the early stages of 50S assembly. It makes multiple contacts with different domains of the 23S rRNA in the assembled 50S subunit and ribosome. Functionally, the globular domain of the protein is located near the polypeptide exit tunnel on the outside of the subunit, while an extended beta-hairpin is found that lines the wall of the exit tunnel in the center of the 70S ribosome. The sequence is that of Large ribosomal subunit protein uL22 from Ehrlichia ruminantium (strain Gardel).